A 156-amino-acid polypeptide reads, in one-letter code: Small ribosomal subunit protein uS7 (156 aa).

This sequence belongs to the universal ribosomal protein uS7 family. As to quaternary structure, part of the 30S ribosomal subunit. Contacts proteins S9 and S11.

Functionally, one of the primary rRNA binding proteins, it binds directly to 16S rRNA where it nucleates assembly of the head domain of the 30S subunit. Is located at the subunit interface close to the decoding center, probably blocks exit of the E-site tRNA. The polypeptide is Small ribosomal subunit protein uS7 (Pseudarthrobacter chlorophenolicus (strain ATCC 700700 / DSM 12829 / CIP 107037 / JCM 12360 / KCTC 9906 / NCIMB 13794 / A6) (Arthrobacter chlorophenolicus)).